The following is a 135-amino-acid chain: Holo-[acyl-carrier-protein] synthase (135 aa).

Mg(2+) contacts are provided by aspartate 8 and glutamate 57.

Belongs to the P-Pant transferase superfamily. AcpS family. The cofactor is Mg(2+).

It localises to the cytoplasm. The enzyme catalyses apo-[ACP] + CoA = holo-[ACP] + adenosine 3',5'-bisphosphate + H(+). Functionally, transfers the 4'-phosphopantetheine moiety from coenzyme A to a Ser of acyl-carrier-protein. The polypeptide is Holo-[acyl-carrier-protein] synthase (Methylobacterium sp. (strain 4-46)).